A 352-amino-acid polypeptide reads, in one-letter code: Gap junction alpha-4 protein (352 aa).

Residues 2-23 (GDWEFLEKLLDQVQEHSTSIGK) lie on the Cytoplasmic side of the membrane. A helical membrane pass occupies residues 24–46 (IWLMVLFIFRILILGLAGESVWG). Topologically, residues 47–76 (DEQSDFICNTEQPGCTNVCYDKAFPISHVR) are extracellular. The chain crosses the membrane as a helical span at residues 77–99 (YWVLQFLFVSTPTLFYLGHVIYL). Topologically, residues 100 to 153 (SRREEKLKQKESELRALDDKEQVEQAIAIIEKKKMKLYIQEDGTVKIKGALMCT) are cytoplasmic. Residues 154 to 176 (YLTSVIFKSLFEAGFLLGQWYLY) traverse the membrane as a helical segment. Over 177–208 (GFVMTPIYVCERVPCPHKVDCFVSRPMEKTIF) the chain is Extracellular. The helical transmembrane segment at 209-231 (IVFMLVVSLISLFLNVLELIHLV) threads the bilayer. Topologically, residues 232 to 352 (CKSMIDTLKK…SSSASKKQYV (121 aa)) are cytoplasmic. A disordered region spans residues 330-352 (KTHSTMEKPSTRASSSASKKQYV). Over residues 340–352 (TRASSSASKKQYV) the composition is skewed to polar residues.

Belongs to the connexin family. Alpha-type (group II) subfamily. As to quaternary structure, a connexon is composed of a hexamer of connexins.

The protein resides in the cell membrane. Its subcellular location is the cell junction. It localises to the gap junction. Its function is as follows. One gap junction consists of a cluster of closely packed pairs of transmembrane channels, the connexons, through which materials of low MW diffuse from one cell to a neighboring cell. The polypeptide is Gap junction alpha-4 protein (gja4) (Xenopus tropicalis (Western clawed frog)).